We begin with the raw amino-acid sequence, 125 residues long: Probable endoribonuclease HigB1 (125 aa).

Belongs to the mycobacterial HigB family.

Toxic component of an atypical, type II toxin-antitoxin chaperone (TAC) system. Probably an endoribonuclease, neutralized by its cognate antitoxin HigA which also requires SecB-like chaperone MT2006 (AC Q7D7P7). This is Probable endoribonuclease HigB1 from Mycobacterium tuberculosis (strain CDC 1551 / Oshkosh).